The following is a 145-amino-acid chain: MNLTDYVKEVSRQDFGIEFQHTASWNSRLQTTGGRFFPEDGHLDFNPKFCKKGDAGTFRKIVRHELCHYHLYYAGKGYRHGDKDFKDLLLQVNGVRYAPSIQSNTFYHYYQCESCGQVYQRKRRMNTKKYACGNCHGKLRHQNQS.

In terms of domain architecture, SprT-like spans 4-141; that stretch reads TDYVKEVSRQ…CGNCHGKLRH (138 aa). Position 64 (His-64) interacts with Zn(2+). The active site involves Glu-65. His-68 provides a ligand contact to Zn(2+).

It belongs to the SprT family. Zn(2+) is required as a cofactor.

The protein resides in the cytoplasm. The polypeptide is Protein SprT-like (Streptococcus mutans serotype c (strain ATCC 700610 / UA159)).